The chain runs to 359 residues: Aromatic amino acid aminotransferase (359 aa).

The span at 1-12 shows a compositional bias: basic and acidic residues; sequence MSETSPKLRAEL. Positions 1-21 are disordered; that stretch reads MSETSPKLRAELEGIPTYKPG. Lys-223 bears the N6-(pyridoxal phosphate)lysine mark.

The protein belongs to the class-II pyridoxal-phosphate-dependent aminotransferase family. In terms of assembly, homodimer. Pyridoxal 5'-phosphate is required as a cofactor.

It catalyses the reaction an aromatic L-alpha-amino acid + 2-oxoglutarate = an aromatic oxo-acid + L-glutamate. In terms of biological role, aminotransferase that catalyzes the conversion of aromatic amino acids and 2-oxoglutarate into corresponding aromatic oxo acids and L-glutamate. The protein is Aromatic amino acid aminotransferase of Streptomyces coelicolor (strain ATCC BAA-471 / A3(2) / M145).